We begin with the raw amino-acid sequence, 356 residues long: 4-hydroxy-3-methylbut-2-en-1-yl diphosphate synthase (flavodoxin) (356 aa).

Residues Cys-262, Cys-265, Cys-297, and Glu-304 each contribute to the [4Fe-4S] cluster site.

The protein belongs to the IspG family. It depends on [4Fe-4S] cluster as a cofactor.

The catalysed reaction is (2E)-4-hydroxy-3-methylbut-2-enyl diphosphate + oxidized [flavodoxin] + H2O + 2 H(+) = 2-C-methyl-D-erythritol 2,4-cyclic diphosphate + reduced [flavodoxin]. The protein operates within isoprenoid biosynthesis; isopentenyl diphosphate biosynthesis via DXP pathway; isopentenyl diphosphate from 1-deoxy-D-xylulose 5-phosphate: step 5/6. Converts 2C-methyl-D-erythritol 2,4-cyclodiphosphate (ME-2,4cPP) into 1-hydroxy-2-methyl-2-(E)-butenyl 4-diphosphate. The chain is 4-hydroxy-3-methylbut-2-en-1-yl diphosphate synthase (flavodoxin) from Campylobacter fetus subsp. fetus (strain 82-40).